The primary structure comprises 464 residues: 3-isopropylmalate dehydratase large subunit (464 aa).

[4Fe-4S] cluster is bound by residues C337, C397, and C400.

It belongs to the aconitase/IPM isomerase family. LeuC type 1 subfamily. Heterodimer of LeuC and LeuD. The cofactor is [4Fe-4S] cluster.

It catalyses the reaction (2R,3S)-3-isopropylmalate = (2S)-2-isopropylmalate. It participates in amino-acid biosynthesis; L-leucine biosynthesis; L-leucine from 3-methyl-2-oxobutanoate: step 2/4. In terms of biological role, catalyzes the isomerization between 2-isopropylmalate and 3-isopropylmalate, via the formation of 2-isopropylmaleate. The sequence is that of 3-isopropylmalate dehydratase large subunit from Bacillus cereus (strain AH187).